Consider the following 461-residue polypeptide: D-phenylhydantoinase (461 aa).

H59, H61, and K151 together coordinate a divalent metal cation. The residue at position 151 (K151) is an N6-carboxylysine. Residue Y156 participates in substrate binding. The a divalent metal cation site is built by H182 and H239. Substrate is bound at residue S286. D313 is a binding site for a divalent metal cation. N335 provides a ligand contact to substrate.

Belongs to the metallo-dependent hydrolases superfamily. Hydantoinase/dihydropyrimidinase family. As to quaternary structure, homotetramer. A divalent metal cation is required as a cofactor. In terms of processing, carboxylation allows a single lysine to coordinate two divalent metal cations.

The enzyme catalyses D-5-phenylhydantoin + H2O = N-carbamoyl-D-phenylglycine + H(+). Its function is as follows. Catalyzes the stereospecific hydrolysis of the cyclic amide bond of D-hydantoin derivatives with an aromatic side chains at the 5'-position. Has no activity on dihydropyrimidines. The physiological function is unknown. The chain is D-phenylhydantoinase from Escherichia coli O7:K1 (strain IAI39 / ExPEC).